The following is a 95-amino-acid chain: Neutrophil antibiotic peptide NP-5 (95 aa).

The signal sequence occupies residues 1–19; that stretch reads MRTLALLAAILLVTLQAQA. Residues 20-62 constitute a propeptide that is removed on maturation; the sequence is ELHSGMADDGVDQQQPRAQDLDVAVYIKQDETSPLEVLGAKAG. Disulfide bonds link cysteine 65–cysteine 93, cysteine 67–cysteine 82, and cysteine 72–cysteine 92.

The protein belongs to the alpha-defensin family.

Its subcellular location is the secreted. In terms of biological role, microbicidal activity. This is Neutrophil antibiotic peptide NP-5 from Oryctolagus cuniculus (Rabbit).